Here is a 401-residue protein sequence, read N- to C-terminus: Phosphoglycerate kinase, cytosolic (401 aa).

(2R)-3-phosphoglycerate-binding residues include Val24, Asp25, Asn27, Arg41, Ser63, His64, Gly66, Arg67, Arg122, His154, and Arg155. Position 200 (Gly200) interacts with ADP. Gly200 is a CDP binding site. Positions 202 and 206 each coordinate AMP. Residue Lys206 participates in ATP binding. Residue Gly224 participates in ADP binding. Gly224 contacts CDP. AMP is bound by residues Gly225 and Gly297. Gly225 and Gly297 together coordinate ATP. Gly322 and Phe327 together coordinate CDP. Position 327 (Phe327) interacts with ADP. Glu328 contacts AMP. 3 residues coordinate ATP: Glu328, Asp359, and Ser360. Asp359 contributes to the Mg(2+) binding site.

This sequence belongs to the phosphoglycerate kinase family. As to quaternary structure, monomer. Requires Mg(2+) as cofactor.

It localises to the cytoplasm. The enzyme catalyses (2R)-3-phosphoglycerate + ATP = (2R)-3-phospho-glyceroyl phosphate + ADP. It functions in the pathway carbohydrate degradation; glycolysis; pyruvate from D-glyceraldehyde 3-phosphate: step 2/5. The chain is Phosphoglycerate kinase, cytosolic from Nicotiana tabacum (Common tobacco).